Consider the following 217-residue polypeptide: Large ribosomal subunit protein uL29m (217 aa).

This sequence belongs to the universal ribosomal protein uL29 family. Component of the mitochondrial large ribosomal subunit. Mature mitochondrial ribosomes consist of a small (37S) and a large (54S) subunit. The 37S subunit contains at least 33 different proteins and 1 molecule of RNA (15S). The 54S subunit contains at least 45 different proteins and 1 molecule of RNA (21S).

Its subcellular location is the mitochondrion. This Neosartorya fischeri (strain ATCC 1020 / DSM 3700 / CBS 544.65 / FGSC A1164 / JCM 1740 / NRRL 181 / WB 181) (Aspergillus fischerianus) protein is Large ribosomal subunit protein uL29m (mrpl4).